The sequence spans 86 residues: Bradykinin-potentiating peptide 25.12 (86 aa).

Residues 1–22 (MNKRVLLVIFFVTLLIADEVNS) form the signal peptide. The interval 67 to 86 (APAAAAAPEEPPVEQRRRRR) is disordered.

This sequence belongs to the non-disulfide-bridged peptide (NDBP) superfamily. Long chain multifunctional peptide (group 2) family. In terms of tissue distribution, expressed by the venom gland.

It is found in the secreted. Its function is as follows. Inhibits angiotensin-converting enzyme (ACE), but does not serve as substrate for the enzyme. Potentiates bradykinin (BK) on the isolated guinea pig ileum as well as the isolated rat uterus for contraction. Also potentiates in vivo the depressor effect of BK on arterial blood pressure in the normotensive anesthetized rat. This Lychas mucronatus (Chinese swimming scorpion) protein is Bradykinin-potentiating peptide 25.12.